Reading from the N-terminus, the 268-residue chain is Tryptophan synthase alpha chain (268 aa).

Catalysis depends on proton acceptor residues Glu-49 and Asp-60.

Belongs to the TrpA family. In terms of assembly, tetramer of two alpha and two beta chains.

The catalysed reaction is (1S,2R)-1-C-(indol-3-yl)glycerol 3-phosphate + L-serine = D-glyceraldehyde 3-phosphate + L-tryptophan + H2O. It functions in the pathway amino-acid biosynthesis; L-tryptophan biosynthesis; L-tryptophan from chorismate: step 5/5. In terms of biological role, the alpha subunit is responsible for the aldol cleavage of indoleglycerol phosphate to indole and glyceraldehyde 3-phosphate. In Dechloromonas aromatica (strain RCB), this protein is Tryptophan synthase alpha chain.